Reading from the N-terminus, the 544-residue chain is Putative pentatricopeptide repeat-containing protein At5g59200, chloroplastic (544 aa).

The disordered stretch occupies residues 1-21; that stretch reads MISSLAAITGGPSTFRRDPDS. The transit peptide at 1 to 25 directs the protein to the chloroplast; the sequence is MISSLAAITGGPSTFRRDPDSNTLR. PPR repeat units follow at residues 60–90, 91–125, 127–156, 157–187, 188–218, 219–253, 254–288, 289–319, 320–354, 355–385, and 391–421; these read DAFV…VSNP, NVYL…SVLP, NYVI…GFGS, SRSV…MPDR, DHVA…VKIK, DTVC…NVSA, NEFT…RMEL, SNFV…MRDK, DVIS…GFRP, NQVT…MKRV, and QIEH…IPIE. The interval 426-501 is type E motif; sequence MLGTLLSACK…EPGCSTIEVD (76 aa). Residues 502–532 form a type E(+) motif region; that stretch reads NQIHEFLVGDIAHPHKEAIYQRLQELNRILR.

Belongs to the PPR family. PCMP-E subfamily.

The protein localises to the plastid. It is found in the chloroplast. Its function is as follows. Involved in RNA editing event in chloroplasts. Required for the editing of a single site in rpl23 transcript. The chain is Putative pentatricopeptide repeat-containing protein At5g59200, chloroplastic (PCMP-E41) from Arabidopsis thaliana (Mouse-ear cress).